We begin with the raw amino-acid sequence, 626 residues long: Coilin (626 aa).

Serine 148 and serine 162 each carry phosphoserine. Disordered regions lie at residues leucine 253–asparagine 309 and arginine 382–serine 433. Residues serine 260–aspartate 292 show a composition bias toward low complexity. Residues arginine 382 to lysine 395 are compositionally biased toward basic and acidic residues. The span at asparagine 396–serine 417 shows a compositional bias: polar residues.

This sequence belongs to the coilin family. In terms of assembly, interacts with tgs1; both proteins are required to maintain Cajal body integrity. Interacts with U2 and U5 snRNAs.

It localises to the cytoplasm. Its subcellular location is the nucleus. It is found in the cajal body. In terms of biological role, component of nuclear coiled bodies, also known as Cajal bodies or CBs, which are involved in the modification and assembly of nucleoplasmic snRNPs. Required for proper pre-mRNA splicing. This Schizosaccharomyces pombe (strain 972 / ATCC 24843) (Fission yeast) protein is Coilin.